The primary structure comprises 106 residues: N(4)-acetylcytidine amidohydrolase (106 aa).

The ASCH domain maps to 9–105 (TFFEFLTPLI…ELYVIEYELI (97 aa)). Lysine 23 (proton acceptor) is an active-site residue. Residue threonine 26 is the Nucleophile of the active site. The Proton donor role is filled by glutamate 76.

The protein belongs to the N(4)-acetylcytidine amidohydrolase family.

It catalyses the reaction N(4)-acetylcytidine + H2O = cytidine + acetate + H(+). It carries out the reaction N(4)-acetyl-2'-deoxycytidine + H2O = 2'-deoxycytidine + acetate + H(+). The catalysed reaction is N(4)-acetylcytosine + H2O = cytosine + acetate + H(+). Its function is as follows. Catalyzes the hydrolysis of N(4)-acetylcytidine (ac4C). The polypeptide is N(4)-acetylcytidine amidohydrolase (Vibrio campbellii (strain ATCC BAA-1116)).